A 311-amino-acid polypeptide reads, in one-letter code: Ribonuclease Z (311 aa).

Residues His-61, His-63, Asp-65, His-66, His-137, Asp-207, and His-263 each contribute to the Zn(2+) site. The active-site Proton acceptor is the Asp-65.

The protein belongs to the RNase Z family. As to quaternary structure, homodimer. The cofactor is Zn(2+).

It carries out the reaction Endonucleolytic cleavage of RNA, removing extra 3' nucleotides from tRNA precursor, generating 3' termini of tRNAs. A 3'-hydroxy group is left at the tRNA terminus and a 5'-phosphoryl group is left at the trailer molecule.. Functionally, zinc phosphodiesterase, which displays some tRNA 3'-processing endonuclease activity. Probably involved in tRNA maturation, by removing a 3'-trailer from precursor tRNA. This chain is Ribonuclease Z, found in Thermococcus onnurineus (strain NA1).